Reading from the N-terminus, the 68-residue chain is Large ribosomal subunit protein uL29 (68 aa).

Belongs to the universal ribosomal protein uL29 family.

The sequence is that of Large ribosomal subunit protein uL29 from Nitrobacter hamburgensis (strain DSM 10229 / NCIMB 13809 / X14).